We begin with the raw amino-acid sequence, 444 residues long: Chitinase-like protein Idgf5 (444 aa).

The signal sequence occupies residues 1–26 (MMWIQKNPFLGLLLCSFLAFFQSTYA). Positions 29–444 (GKLVCFYDAQ…PILRSIKFKL (416 aa)) constitute a GH18 domain. A disulfide bridge connects residues cysteine 33 and cysteine 60. N-linked (GlcNAc...) asparagine glycans are attached at residues asparagine 289 and asparagine 311. Cysteine 349 and cysteine 429 are joined by a disulfide.

It belongs to the glycosyl hydrolase 18 family. IDGF subfamily. Glycosylated.

It localises to the secreted. In terms of biological role, probably required to stimulate the proliferation, polarization and motility of imaginal disk cells. May act by stabilizing the binding of insulin-like peptides to its receptor through a simultaneous interaction with both molecules to form a multiprotein signaling complex. The polypeptide is Chitinase-like protein Idgf5 (Idgf5) (Drosophila melanogaster (Fruit fly)).